Reading from the N-terminus, the 225-residue chain is Membrane protein (225 aa).

The Virion surface segment spans residues 1–20; sequence MSNETNCTLDFEQSVQLFKE. 2 N-linked (GlcNAc...) asparagine; by host glycosylation sites follow: Asn-3 and Asn-6. A helical membrane pass occupies residues 21 to 41; the sequence is YNLFITAFLLFLTIILQYGYA. Residues 42–51 lie on the Intravirion side of the membrane; that stretch reads TRSKVIYTLK. A helical transmembrane segment spans residues 52-72; the sequence is MIVLWCFWPLNIAVGVISCIY. The Virion surface portion of the chain corresponds to 73-77; the sequence is PPNTG. Residues 78 to 98 traverse the membrane as a helical segment; sequence GLVAAIILTVFACLSFVGYWI. Residues 99–225 lie on the Intravirion side of the membrane; sequence QSIRLFKRCR…VATGGSSLYT (127 aa).

This sequence belongs to the gammacoronaviruses M protein family. As to quaternary structure, homomultimer. Interacts with envelope E protein in the budding compartment of the host cell, which is located between endoplasmic reticulum and the Golgi complex. Forms a complex with HE and S proteins. Interacts with nucleocapsid N protein. This interaction probably participates in RNA packaging into the virus.

It is found in the virion membrane. Its subcellular location is the host Golgi apparatus membrane. Component of the viral envelope that plays a central role in virus morphogenesis and assembly via its interactions with other viral proteins. This chain is Membrane protein, found in Gallus gallus (Chicken).